Consider the following 269-residue polypeptide: Signal recognition particle receptor subunit beta (269 aa).

The chain crosses the membrane as a helical span at residues 35-55 (LLSVAVALLAVLLTLVFWKFI). GTP is bound by residues 69-77 (GLCDSGKTL) and 90-93 (TQTS). The residue at position 110 (Ser-110) is a Phosphoserine. Residues Gly-118 and 178 to 181 (NKQD) contribute to the GTP site. Thr-212 is subject to Phosphothreonine. Residue Ala-246 coordinates GTP.

The protein belongs to the SRP receptor beta subunit family. As to quaternary structure, heterodimer with SRPRA.

It localises to the endoplasmic reticulum membrane. Its function is as follows. Component of the SRP (signal recognition particle) receptor. Ensures, in conjunction with the signal recognition particle, the correct targeting of the nascent secretory proteins to the endoplasmic reticulum membrane system. May mediate the membrane association of SR. In Mus musculus (Mouse), this protein is Signal recognition particle receptor subunit beta (Srprb).